Reading from the N-terminus, the 162-residue chain is MARVEL domain-containing protein 1 (162 aa).

Residues 1–17 (MPTQPQEKRSFLQFLKS) lie on the Cytoplasmic side of the membrane. The 142-residue stretch at 14-155 (FLKSFVGIVR…SGIYCSCRKC (142 aa)) folds into the MARVEL domain. A helical membrane pass occupies residues 18-38 (FVGIVRVLQILLGAGLWVTIA). Over 39-47 (ANKYEGSIH) the chain is Extracellular. The chain crosses the membrane as a helical span at residues 48-68 (FVLFVAVLFWLLTLAIFILTL). Residues 69 to 86 (LDKQDLVPIVGGERWLLS) are Cytoplasmic-facing. The chain crosses the membrane as a helical span at residues 87–107 (NLIHDVVATLLYLSTIGIMIY). Topologically, residues 108 to 127 (KTQKNSYCNLDVYKHHCLYK) are extracellular. The chain crosses the membrane as a helical span at residues 128–148 (VYLTASVFACLTAAVYLLSGI). Topologically, residues 149–162 (YCSCRKCRGERTVV) are cytoplasmic.

The protein resides in the membrane. It localises to the nucleus. This chain is MARVEL domain-containing protein 1 (marveld1), found in Danio rerio (Zebrafish).